The chain runs to 338 residues: tRNA pseudouridine synthase D (338 aa).

The active-site Nucleophile is Asp79. In terms of domain architecture, TRUD spans 154–303; sequence GVPNYFGEQR…EEAWRANILY (150 aa).

It belongs to the pseudouridine synthase TruD family.

The catalysed reaction is uridine(13) in tRNA = pseudouridine(13) in tRNA. Its function is as follows. Responsible for synthesis of pseudouridine from uracil-13 in transfer RNAs. The chain is tRNA pseudouridine synthase D from Legionella pneumophila (strain Corby).